A 159-amino-acid chain; its full sequence is Small ribosomal subunit protein uS4 (159 aa).

The S4 RNA-binding domain maps to 106–158 (RRLQTIVYRMGLAKSIYHARQLIVHGHIAVAGRRVSSPGFLVPRELEDKISLI).

This sequence belongs to the universal ribosomal protein uS4 family. In terms of assembly, part of the 30S ribosomal subunit. Contacts protein S5. The interaction surface between S4 and S5 is involved in control of translational fidelity.

One of the primary rRNA binding proteins, it binds directly to 16S rRNA where it nucleates assembly of the body of the 30S subunit. Its function is as follows. With S5 and S12 plays an important role in translational accuracy. The polypeptide is Small ribosomal subunit protein uS4 (Pyrobaculum neutrophilum (strain DSM 2338 / JCM 9278 / NBRC 100436 / V24Sta) (Thermoproteus neutrophilus)).